The sequence spans 163 residues: 2-C-methyl-D-erythritol 2,4-cyclodiphosphate synthase (163 aa).

Residues D8 and H10 each coordinate a divalent metal cation. 4-CDP-2-C-methyl-D-erythritol 2-phosphate contacts are provided by residues D8–H10 and H34–S35. H42 contributes to the a divalent metal cation binding site. 4-CDP-2-C-methyl-D-erythritol 2-phosphate-binding positions include D56–G58, T132–E135, F139, and R142.

It belongs to the IspF family. In terms of assembly, homotrimer. A divalent metal cation is required as a cofactor.

The enzyme catalyses 4-CDP-2-C-methyl-D-erythritol 2-phosphate = 2-C-methyl-D-erythritol 2,4-cyclic diphosphate + CMP. It participates in isoprenoid biosynthesis; isopentenyl diphosphate biosynthesis via DXP pathway; isopentenyl diphosphate from 1-deoxy-D-xylulose 5-phosphate: step 4/6. Its function is as follows. Involved in the biosynthesis of isopentenyl diphosphate (IPP) and dimethylallyl diphosphate (DMAPP), two major building blocks of isoprenoid compounds. Catalyzes the conversion of 4-diphosphocytidyl-2-C-methyl-D-erythritol 2-phosphate (CDP-ME2P) to 2-C-methyl-D-erythritol 2,4-cyclodiphosphate (ME-CPP) with a corresponding release of cytidine 5-monophosphate (CMP). The protein is 2-C-methyl-D-erythritol 2,4-cyclodiphosphate synthase of Moorella thermoacetica (strain ATCC 39073 / JCM 9320).